The sequence spans 243 residues: tRNA (guanine-N(1)-)-methyltransferase (243 aa).

Residues glycine 108 and 127 to 132 each bind S-adenosyl-L-methionine; that span reads LGDFVL.

It belongs to the RNA methyltransferase TrmD family. As to quaternary structure, homodimer.

It localises to the cytoplasm. The catalysed reaction is guanosine(37) in tRNA + S-adenosyl-L-methionine = N(1)-methylguanosine(37) in tRNA + S-adenosyl-L-homocysteine + H(+). Functionally, specifically methylates guanosine-37 in various tRNAs. The sequence is that of tRNA (guanine-N(1)-)-methyltransferase from Streptococcus pyogenes serotype M5 (strain Manfredo).